Here is a 95-residue protein sequence, read N- to C-terminus: Aspartyl/glutamyl-tRNA(Asn/Gln) amidotransferase subunit C (95 aa).

It belongs to the GatC family. In terms of assembly, heterotrimer of A, B and C subunits.

The catalysed reaction is L-glutamyl-tRNA(Gln) + L-glutamine + ATP + H2O = L-glutaminyl-tRNA(Gln) + L-glutamate + ADP + phosphate + H(+). The enzyme catalyses L-aspartyl-tRNA(Asn) + L-glutamine + ATP + H2O = L-asparaginyl-tRNA(Asn) + L-glutamate + ADP + phosphate + 2 H(+). Its function is as follows. Allows the formation of correctly charged Asn-tRNA(Asn) or Gln-tRNA(Gln) through the transamidation of misacylated Asp-tRNA(Asn) or Glu-tRNA(Gln) in organisms which lack either or both of asparaginyl-tRNA or glutaminyl-tRNA synthetases. The reaction takes place in the presence of glutamine and ATP through an activated phospho-Asp-tRNA(Asn) or phospho-Glu-tRNA(Gln). The polypeptide is Aspartyl/glutamyl-tRNA(Asn/Gln) amidotransferase subunit C (Nitrobacter winogradskyi (strain ATCC 25391 / DSM 10237 / CIP 104748 / NCIMB 11846 / Nb-255)).